We begin with the raw amino-acid sequence, 877 residues long: DNA polymerase I (877 aa).

Residues T180–K270 form the 5'-3' exonuclease domain. A 3'-5' exonuclease domain is found at D308–L468.

This sequence belongs to the DNA polymerase type-A family. Single-chain monomer with multiple functions.

It carries out the reaction DNA(n) + a 2'-deoxyribonucleoside 5'-triphosphate = DNA(n+1) + diphosphate. Its function is as follows. In addition to polymerase activity, this DNA polymerase exhibits 3'-5' and 5'-3' exonuclease activity. This is DNA polymerase I (polA) from Lactococcus lactis subsp. lactis (strain IL1403) (Streptococcus lactis).